The following is a 360-amino-acid chain: Peptide chain release factor 1 (360 aa).

The residue at position 237 (Gln237) is an N5-methylglutamine.

Belongs to the prokaryotic/mitochondrial release factor family. Methylated by PrmC. Methylation increases the termination efficiency of RF1.

The protein resides in the cytoplasm. Peptide chain release factor 1 directs the termination of translation in response to the peptide chain termination codons UAG and UAA. This chain is Peptide chain release factor 1, found in Pseudomonas fluorescens (strain ATCC BAA-477 / NRRL B-23932 / Pf-5).